The primary structure comprises 270 residues: Beta carbonic anhydrase 1 (270 aa).

Positions 39, 41, 105, and 108 each coordinate Zn(2+).

The protein belongs to the beta-class carbonic anhydrase family. As to quaternary structure, oligomer. The cofactor is Zn(2+).

It catalyses the reaction hydrogencarbonate + H(+) = CO2 + H2O. Reversible hydration of carbon dioxide. This chain is Beta carbonic anhydrase 1 (bca-1), found in Caenorhabditis elegans.